The sequence spans 1005 residues: MAQGFAVGFDPLGLGDLSSGSLSSLSSRGHLGSDSGSTATRYLLRKQQRLPNVPPRGIRASSPMGRVILINSPIEANSDESDIIHSVRVEKSPAGRLGFSVRGGSEHGLGIFVSKVEEGSSAERAGLCVGDKITEVNGLSLESTTMGSAVKVLTGSSRLHMMVRRMGRVPGIKFSKEKTTWVDVVNRRLVVEKCSSTPSDTSSEDGIRRIVHLYTTSDDFCLGFNIRGGKEFGLGIYVSKVDHGGLAEENGIKVGDQVLAANGVRFDDISHSQAVEVLKGQTHIMLTIKETGRYPAYKEMVSEYCWLDRLSNGVLQQLSPASESSSSVFSCASSAPYSSDSLPSDRMDICLGPEEPGSRGPGWGRADTAMQTEPDAGGRVETWCSVRPTVILRDTTIRSDGPQPGRCLDSAISESPKTALLLALSRPRPPITRSQSYLTLWEEKKQRKKEKSGSTGEKGALQRSKTLMNLFFKGGRQGRLARDGRREAWTPDSGSLAKTCPRLDMEKAGGMGPVQKFVTWRLRRDRERGRALLSARSGSPSSQLPNVDEQVQAWESRRPLIQDLAQRLLTDDEVLAVTRHCSRYVHEGGIEDLVRPLLAILDRPEKLLLLRDIRSVVAPTDLGRFDSMVMPVELEAFEALKSRAVRPPALRPARQDTPPKRHLITPVPDSRGGFYLLPVNGFPEEEDDEELRERLGALKVSPSASAPRHPHKGIPPLQDVPVDAFTPLRSACTPPPQLPHVARRPPRPNWLLTEPLSREHPPQSQIRGRAQSRSRSRSRSRSRSRSSRGQGKSPGRRSPSPVPIPAPSMANGRYHKPQKARPPLPRPLDGEAAKMGAKQGSSENGTGGTAEEAAMKTPSGELKTVTLSKMKQSLGISISGGIESKVQPMVKIEKIFPGGAAFLSGALQAGFELVAVDGESLEQVTHQRAVDTIRRAYRNKAREPMELVVRVPGPSPRPSPSDSSALTDGGLPAAHQPLDAAPVPAHWLPEPPTNPQTPPTDARLL.

2 PDZ domains span residues 86 to 168 (SVRV…RMGR) and 210 to 293 (IVHL…ETGR). Disordered regions lie at residues 353–378 (PEEP…DAGG), 700–859 (VSPS…KTPS), and 949–1005 (VRVP…ARLL). The span at 770–786 (AQSRSRSRSRSRSRSRS) shows a compositional bias: basic residues. Low complexity predominate over residues 787–799 (SRGQGKSPGRRSP). The segment covering 989-998 (PEPPTNPQTP) has biased composition (pro residues).

As to quaternary structure, homodimerizes (via PDZ2 domain). Component of USH2 complex, composed of ADGRV1, PDZD7, USH2A and WHRN. Interacts (via PDZ domains) with WHRN; the interaction is direct. Interacts with USH1G. Interacts with ADGRV1 (via the cytoplasmic region). Interacts with USH2A (via the cytoplasmic region). Interacts with MYO7A (via MyTH4-FERM domains).

The protein resides in the cell projection. Its subcellular location is the cilium. It localises to the nucleus. The protein localises to the stereocilium. In terms of biological role, in cochlear developing hair cells, essential in organizing the USH2 complex at stereocilia ankle links. Blocks inhibition of adenylate cyclase activity mediated by ADGRV1. This is PDZ domain-containing protein 7 (PDZD7) from Pongo abelii (Sumatran orangutan).